We begin with the raw amino-acid sequence, 143 residues long: MATAAAGSSLICIKSASCSLNRAQVPSGLSSLRSVSLPISGKIFPSLRSSRGPLSFRVCCQAKQETVTRVCEIVKKQLALPEDSEVNGLSKFSALGADSLDTVEIVMGLEEEFGISVEEESAQSIQTVQDAADLIEKLVGNKK.

Residues 1-60 (MATAAAGSSLICIKSASCSLNRAQVPSGLSSLRSVSLPISGKIFPSLRSSRGPLSFRVCC) constitute a chloroplast transit peptide. The Carrier domain occupies 64–139 (QETVTRVCEI…DAADLIEKLV (76 aa)). An O-(pantetheine 4'-phosphoryl)serine modification is found at Ser-99.

It belongs to the acyl carrier protein (ACP) family. 4'-phosphopantetheine is transferred from CoA to a specific serine of apo-ACP by acpS. This modification is essential for activity because fatty acids are bound in thioester linkage to the sulfhydryl of the prosthetic group.

It localises to the plastid. Its subcellular location is the chloroplast. The protein operates within lipid metabolism; fatty acid biosynthesis. Functionally, carrier of the growing fatty acid chain in fatty acid biosynthesis. The polypeptide is Acyl carrier protein 3, chloroplastic (ACL1.3) (Cuphea lanceolata (Cigar flower)).